We begin with the raw amino-acid sequence, 378 residues long: Small RNA 2'-O-methyltransferase (378 aa).

Asp-61 contributes to the S-adenosyl-L-methionine binding site. The Mg(2+) site is built by Glu-114, Glu-117, His-118, and His-176.

It belongs to the methyltransferase superfamily. HEN1 family. Mg(2+) is required as a cofactor.

It is found in the cytoplasm. It carries out the reaction small RNA 3'-end nucleotide + S-adenosyl-L-methionine = small RNA 3'-end 2'-O-methylnucleotide + S-adenosyl-L-homocysteine + H(+). Its function is as follows. Methyltransferase that adds a 2'-O-methyl group at the 3'-end of small RNAs. The chain is Small RNA 2'-O-methyltransferase from Schizosaccharomyces pombe (strain 972 / ATCC 24843) (Fission yeast).